Reading from the N-terminus, the 452-residue chain is Pup--protein ligase (452 aa).

Glu9 serves as a coordination point for Mg(2+). Position 53 (Arg53) interacts with ATP. Tyr55 lines the Mg(2+) pocket. Asp57 functions as the Proton acceptor in the catalytic mechanism. Residue Glu63 participates in Mg(2+) binding. ATP-binding residues include Thr66 and Trp419.

Belongs to the Pup ligase/Pup deamidase family. Pup-conjugating enzyme subfamily.

It catalyses the reaction ATP + [prokaryotic ubiquitin-like protein]-L-glutamate + [protein]-L-lysine = ADP + phosphate + N(6)-([prokaryotic ubiquitin-like protein]-gamma-L-glutamyl)-[protein]-L-lysine.. It functions in the pathway protein degradation; proteasomal Pup-dependent pathway. Its pathway is protein modification; protein pupylation. Functionally, catalyzes the covalent attachment of the prokaryotic ubiquitin-like protein modifier Pup to the proteasomal substrate proteins, thereby targeting them for proteasomal degradation. This tagging system is termed pupylation. The ligation reaction involves the side-chain carboxylate of the C-terminal glutamate of Pup and the side-chain amino group of a substrate lysine. The sequence is that of Pup--protein ligase from Nocardia farcinica (strain IFM 10152).